The sequence spans 138 residues: Acidic phospholipase A2 BthA-1 (138 aa).

The first 16 residues, 1 to 16, serve as a signal peptide directing secretion; sequence MRTLWIMAVLLVGVEG. 7 cysteine pairs are disulfide-bonded: C42/C131, C44/C60, C59/C111, C65/C138, C66/C104, C73/C97, and C91/C102. Ca(2+) is bound by residues Y43, G47, and G48. H63 is a catalytic residue. D64 contacts Ca(2+). D105 is an active-site residue.

Belongs to the phospholipase A2 family. Group II subfamily. D49 sub-subfamily. As to quaternary structure, homodimer; non-covalently linked. It depends on Ca(2+) as a cofactor. In terms of tissue distribution, expressed by the venom gland.

It is found in the secreted. It catalyses the reaction a 1,2-diacyl-sn-glycero-3-phosphocholine + H2O = a 1-acyl-sn-glycero-3-phosphocholine + a fatty acid + H(+). Its activity is regulated as follows. Inhibited by EDTA and bromophenacyl bromide (BPB). Snake venom phospholipase A2 (PLA2) that displays edema-inducing activities (activity that is inhibited by EDTA and dexamethasone), inhibits phospholipid-dependent collagen/ADP-induced platelet aggregation, possess hypotensive as well as anticoagulant activities. In addition, this enzyme shows bactericidal activity against E.coli and S.aureus. PLA2 catalyzes the calcium-dependent hydrolysis of the 2-acyl groups in 3-sn-phosphoglycerides. The sequence is that of Acidic phospholipase A2 BthA-1 from Bothrops jararacussu (Jararacussu).